Reading from the N-terminus, the 302-residue chain is S-crystallin SL4 (302 aa).

3 consecutive repeat copies span residues 45–54 (GGYAVQSRGD), 55–64 (GGYYVKSRGD), and 65–74 (GGYPVQGRGD). Residues 45-84 (GGYAVQSRGDGGYYVKSRGDGGYPVQGRGDTGYSSQTRSD) are 4 X approximate tandem repeats of G-G-Y-[AYP]-V-[QK]-[SG]-R-G-D. Short sequence motifs (cell attachment site) lie at residues 52–54 (RGD), 62–64 (RGD), and 72–74 (RGD). Residues 68–92 (PVQGRGDTGYSSQTRSDDACLGQGR) form a disordered region. Residues 75–84 (TGYSSQTRSD) form a 4; approximate repeat. The Cell attachment site signature appears at 113–115 (RGD). Residues 118–205 (SDINSGLYSG…ESASRRSRNH (88 aa)) form a disordered region. 2 stretches are compositionally biased toward basic and acidic residues: residues 129–166 (RMDD…HYRS) and 177–192 (AEDR…RIDI). One can recognise a GST C-terminal domain in the interval 183-302 (GHSDSHRIDI…YIKRRYQSDF (120 aa)).

The protein belongs to the GST superfamily.

S-crystallins are structural components of squids and octopi eye lens. The sequence is that of S-crystallin SL4 from Nototodarus sloanii (Wellington flying squid).